Here is a 359-residue protein sequence, read N- to C-terminus: UDP-N-acetylglucosamine--N-acetylmuramyl-(pentapeptide) pyrophosphoryl-undecaprenol N-acetylglucosamine transferase (359 aa).

UDP-N-acetyl-alpha-D-glucosamine contacts are provided by residues 13 to 15 (TAG), asparagine 125, arginine 161, serine 193, isoleucine 241, and glutamine 285.

Belongs to the glycosyltransferase 28 family. MurG subfamily.

It localises to the cell membrane. It catalyses the reaction di-trans,octa-cis-undecaprenyl diphospho-N-acetyl-alpha-D-muramoyl-L-alanyl-D-glutamyl-meso-2,6-diaminopimeloyl-D-alanyl-D-alanine + UDP-N-acetyl-alpha-D-glucosamine = di-trans,octa-cis-undecaprenyl diphospho-[N-acetyl-alpha-D-glucosaminyl-(1-&gt;4)]-N-acetyl-alpha-D-muramoyl-L-alanyl-D-glutamyl-meso-2,6-diaminopimeloyl-D-alanyl-D-alanine + UDP + H(+). The protein operates within cell wall biogenesis; peptidoglycan biosynthesis. Its function is as follows. Cell wall formation. Catalyzes the transfer of a GlcNAc subunit on undecaprenyl-pyrophosphoryl-MurNAc-pentapeptide (lipid intermediate I) to form undecaprenyl-pyrophosphoryl-MurNAc-(pentapeptide)GlcNAc (lipid intermediate II). The sequence is that of UDP-N-acetylglucosamine--N-acetylmuramyl-(pentapeptide) pyrophosphoryl-undecaprenol N-acetylglucosamine transferase from Corynebacterium diphtheriae (strain ATCC 700971 / NCTC 13129 / Biotype gravis).